The primary structure comprises 152 residues: Large ribosomal subunit protein bL9 (152 aa).

This sequence belongs to the bacterial ribosomal protein bL9 family.

Functionally, binds to the 23S rRNA. This Mycobacterium bovis (strain ATCC BAA-935 / AF2122/97) protein is Large ribosomal subunit protein bL9.